The chain runs to 129 residues: Gas vesicle protein C (129 aa).

3 repeats span residues 19 to 51, 52 to 84, and 85 to 117; these read VTQL…LHQF, HQNL…LHKF, and HQNL…LQQF. Residues 19 to 117 form a 3 X 33 AA tandem repeats region; that stretch reads VTQLFRETHE…KAQSQYLQQF (99 aa).

Belongs to the gas vesicle GvpC family.

It localises to the gas vesicle. Functionally, confers stability, involved in shaping gas vesicles, hollow, gas filled proteinaceous nanostructures. During planktonic growth they allow positioning of the organism at a favorable depth for light or nutrient acquisition. Its function is as follows. Cluster expression in E.coli (gvpA1-gvpA2-gvpC-gvpN-gvpJ-gvpK-gvpF-gvpG-gvpV-gvpW) allows cells to float and produces irregularly shaped gas vesicles. In Nostoc sp. (strain PCC 7120 / SAG 25.82 / UTEX 2576), this protein is Gas vesicle protein C.